A 248-amino-acid polypeptide reads, in one-letter code: Pyridoxine 5'-phosphate synthase (248 aa).

3-amino-2-oxopropyl phosphate-binding residues include Asn8 and Arg19. Residue His44 is the Proton acceptor of the active site. Residues Arg46 and His51 each coordinate 1-deoxy-D-xylulose 5-phosphate. Glu76 functions as the Proton acceptor in the catalytic mechanism. Position 106 (Thr106) interacts with 1-deoxy-D-xylulose 5-phosphate. Catalysis depends on His200, which acts as the Proton donor. 3-amino-2-oxopropyl phosphate is bound by residues Asp201 and 223 to 224 (GH).

This sequence belongs to the PNP synthase family. In terms of assembly, homooctamer; tetramer of dimers.

The protein resides in the cytoplasm. It catalyses the reaction 3-amino-2-oxopropyl phosphate + 1-deoxy-D-xylulose 5-phosphate = pyridoxine 5'-phosphate + phosphate + 2 H2O + H(+). Its pathway is cofactor biosynthesis; pyridoxine 5'-phosphate biosynthesis; pyridoxine 5'-phosphate from D-erythrose 4-phosphate: step 5/5. Its function is as follows. Catalyzes the complicated ring closure reaction between the two acyclic compounds 1-deoxy-D-xylulose-5-phosphate (DXP) and 3-amino-2-oxopropyl phosphate (1-amino-acetone-3-phosphate or AAP) to form pyridoxine 5'-phosphate (PNP) and inorganic phosphate. The chain is Pyridoxine 5'-phosphate synthase from Chelativorans sp. (strain BNC1).